We begin with the raw amino-acid sequence, 490 residues long: Cyclin-T1-3 (490 aa).

Disordered regions lie at residues 275–391 (RVAP…GDVA) and 414–490 (AAED…RLRS). Polar residues-rich tracts occupy residues 282-298 (QGNDTEGSSASVVNQRA) and 352-365 (TANSNEGPNMSSTM). 2 stretches are compositionally biased toward basic and acidic residues: residues 367-391 (AMKKIDKDKVKAALEKRRKSKGDVA) and 457-490 (QEYRSPELDNRKRKDMHEHRNYDRGERDLKRLRS).

It belongs to the cyclin family. Cyclin T subfamily.

The sequence is that of Cyclin-T1-3 (CYCT1-3) from Oryza sativa subsp. japonica (Rice).